A 137-amino-acid polypeptide reads, in one-letter code: CUB domain-containing protein (137 aa).

The N-terminal stretch at 1–21 is a signal peptide; the sequence is MRLSRAFAWPLLCSIATTVKA. Intrachain disulfides connect Cys-30/Cys-51 and Cys-75/Cys-96. The CUB domain maps to 30–132; sequence CGGHYTDEYG…TFFEIYYFVD (103 aa).

The sequence is that of CUB domain-containing protein from Homo sapiens (Human).